The primary structure comprises 403 residues: Sex hormone-binding globulin (403 aa).

An N-terminal signal peptide occupies residues 1–30; it reads MEKGEVASLRCRLLLLLLLLTLPPTHQGRT. Laminin G-like domains are found at residues 46 to 218 and 225 to 391; these read KYLS…LGNC and GLFF…THSC. A disulfide bridge links C194 with C218. Residue N274 is glycosylated (N-linked (GlcNAc...) asparagine). A disulfide bridge connects residues C363 and C391. A glycan (N-linked (GlcNAc...) asparagine) is linked at N397.

In terms of assembly, homodimer. Isoform 2 is only expressed in the liver.

The protein localises to the secreted. Functions as an androgen transport protein, but may also be involved in receptor mediated processes. Each dimer binds one molecule of steroid. Specific for 5-alpha-dihydrotestosterone, testosterone, and 17-beta-estradiol. Regulates the plasma metabolic clearance rate of steroid hormones by controlling their plasma concentration. This chain is Sex hormone-binding globulin (Shbg), found in Rattus norvegicus (Rat).